Here is a 325-residue protein sequence, read N- to C-terminus: Malate dehydrogenase (325 aa).

9–15 (GAAGAIG) lines the NAD(+) pocket. Substrate is bound by residues R90 and R96. NAD(+) is bound by residues N103, Q110, and 127–129 (VGN). Residues N129 and R160 each coordinate substrate. The Proton acceptor role is filled by H185.

The protein belongs to the LDH/MDH superfamily. MDH type 2 family.

The catalysed reaction is (S)-malate + NAD(+) = oxaloacetate + NADH + H(+). In terms of biological role, catalyzes the reversible oxidation of malate to oxaloacetate. The protein is Malate dehydrogenase of Rubrobacter xylanophilus (strain DSM 9941 / JCM 11954 / NBRC 16129 / PRD-1).